Reading from the N-terminus, the 1603-residue chain is MITNTPLQFSVLWASILSWINISSPLILFGLYYGFLTTLPIGPSQILSIRAFLLEGNLSGTVAVSGLILGQLIIFLSIYYSPLYTLLLKPHTVTLLVLPYLLFYWYRIKDLLDYQSLRPINSIKDSRIYKIFFDSFIFQLLNPVLLPSPILVRLINLFFFRYSNNFLFVLSCFFGWLSGHLFFFNCIKFLLIRIEKDSPILYLLVKRIIYRTFSIFVLACILLYLGRAPVPFFTKKLNDELQFNKSGFLWLNKPWPTFFFDYYRWNRPFRYIENNRFTNKSPVKKSVSQYFFNISLSDGKQKISFTALPSLSIFEKDLKTYLNISTNNNNLYKNWLDTKNERKDNLLYELENRIQALDNGLVIKEVIEKKTSLSNNEGINLTKINDPFLNGSFRGKAIITKSPWLLKENSYKLKKNRKIVYLKENKLKIWISNRWRELRRKNLPLPWEPLNKNARRSLVLLIQGSKNKKLKRKLQQIHFSEEQALINLTKQTNISDLTEKLENKHLLNKKFTKISHFNWELVLNLSPRQRAVYFKELEYEKWQILVRSWKNLLSVNSINSTQLNKFILLLKKLFTFHKKFALQEISKELPRWTSKLRNDKFDVIAIGITDIRQRKVKNLGYLIKGKEKRRKIVRRFSQQSDFRRRLVKGSMRSRRRKTLIWKILQLKTHSPFFLRINEKHIPFQISLNKLNLIDVKHIFKNPVEKQKKIALFPTKNNVTLKKKTKADRLAIANRWDFPLAQWGRSWLLLIQSYFRKYLILPILIISKNIIRLLLFQTPEWSEDWNDWNKEMYIKCTYDGIEVSEKALPEQWLRDGLQIKIIYPFILKPWHNLQLETNIKKNLNDLMNTNDNFSTNIKKKKIKYSYLTAWGFETNAPFGDIKKKPSFWKPIRKELKKKWKKNILLNFNKIYSKFSLVKKKITNNSNNSINNESKDLVKENIKINNNLKFNLTNKNYNKKLPEQISSKFSQTILSENQIKNKYKISTNIQKLENLKFLKKSKIEKITKKINFDKIEFFNKLNNDNKVYFTNKQKKIENKQKLIKYYKKNISLVNKWSYFFKLNFNKINKNFFQFSINIIRFNINLISKIQQNLILIKNRKIWNPLKVSQINQKKDKINYKYSNDFGEKIQSLKINVNQENILLMSQAYLFHKIWQIEKTNNKCDFKYLLKNWTSNSVIKKKINRNLKKMDLKFLKEQNWKNWLQNFNKYNLSSQVWYKLAPQKWRNQINYQWKGKEQNNLKFSEKQIKALTLSKEKTFFYKLFIDSLLEQNRKISKRYKYNYLCYSYLDFKKQPNFLESTKNKKESLFNNEILQISKNQVNNNYKQDISLKSNLILWLIPTLTEKKYINKIETINRNNISLLKEKNKKNSRNKKTLRERERHETIRQWKWKSKNIEKRFKELGDMASLMTFMQDQENSVSLSAKMRENLDLFRLLFCRDVGVNKLTINSEHRLPRVLDDQILMYKVISLFLKSKNRFKKNVNITNFNLSTSRIEFFQNNNQNNNFNLINLEDIMLLKHRKELKVLNLLNLKQNTNQILNFNKVILKENKRKRIELNKIQNKNQNLTIKHFLWPTFRLEDLACVNRFWFNTSNGSRFTMLRIRMYT.

The next 6 helical transmembrane spans lie at 11-31 (VLWASILSWINISSPLILFGL), 58-78 (LSGTVAVSGLILGQLIIFLSI), 86-106 (LLLKPHTVTLLVLPYLLFYWY), 131-151 (IFFDSFIFQLLNPVLLPSPIL), 167-187 (LFVLSCFFGWLSGHLFFFNCI), and 213-233 (FSIFVLACILLYLGRAPVPFF).

Belongs to the TIC214 family. Part of the Tic complex.

The protein localises to the plastid. It is found in the chloroplast inner membrane. Its function is as follows. Involved in protein precursor import into chloroplasts. May be part of an intermediate translocation complex acting as a protein-conducting channel at the inner envelope. In Physcomitrium patens (Spreading-leaved earth moss), this protein is Protein TIC 214.